Reading from the N-terminus, the 130-residue chain is Small ribosomal subunit protein uS8 (130 aa).

The protein belongs to the universal ribosomal protein uS8 family. Part of the 30S ribosomal subunit. Contacts proteins S5 and S12.

Its function is as follows. One of the primary rRNA binding proteins, it binds directly to 16S rRNA central domain where it helps coordinate assembly of the platform of the 30S subunit. The chain is Small ribosomal subunit protein uS8 from Photobacterium profundum (strain SS9).